The sequence spans 255 residues: Reaction center protein L chain (255 aa).

The next 3 helical transmembrane spans lie at 12–35 (GFFG…GTAL), 64–92 (GLWQ…RKLG), and 95–120 (LHIP…LLLG). Positions 133 and 153 each coordinate (7R,8Z)-bacteriochlorophyll b. Residues 150–179 (NPAHMIGITFFFTNCMAFGMHGSIILSVLN) form a helical membrane-spanning segment. H170 provides a ligand contact to Fe cation. F196 is an a ubiquinone binding site. The chain crosses the membrane as a helical span at residues 205 to 231 (GTLGIHRLGVFLAISAAFWSAVCIILS). H210 is a Fe cation binding site.

This sequence belongs to the reaction center PufL/M/PsbA/D family. Reaction center is composed of four bacteriochlorophylls, two bacteriopheophytins, two ubiquinones, one iron, and three highly hydrophobic polypeptide chains (designated L, M, and H).

It is found in the cellular chromatophore membrane. In terms of biological role, the reaction center is a membrane-bound complex that mediates the initial photochemical event in the electron transfer process of photosynthesis. The chain is Reaction center protein L chain (pufL) from Pararhodospirillum photometricum (Rhodospirillum photometricum).